A 237-amino-acid polypeptide reads, in one-letter code: Endonuclease NucS (237 aa).

Belongs to the NucS endonuclease family.

The protein localises to the cytoplasm. Cleaves both 3' and 5' ssDNA extremities of branched DNA structures. The protein is Endonuclease NucS of Saccharolobus islandicus (strain L.S.2.15 / Lassen #1) (Sulfolobus islandicus).